The following is a 150-amino-acid chain: Endoribonuclease YbeY (150 aa).

H112, H116, and H122 together coordinate Zn(2+).

The protein belongs to the endoribonuclease YbeY family. The cofactor is Zn(2+).

The protein resides in the cytoplasm. Its function is as follows. Single strand-specific metallo-endoribonuclease involved in late-stage 70S ribosome quality control and in maturation of the 3' terminus of the 16S rRNA. In Geobacter sulfurreducens (strain ATCC 51573 / DSM 12127 / PCA), this protein is Endoribonuclease YbeY.